Reading from the N-terminus, the 310-residue chain is Acetyl-coenzyme A carboxylase carboxyl transferase subunit beta, chloroplastic (310 aa).

The region spanning 47 to 310 (LWARCDNCGN…LYLSVPYNKN (264 aa)) is the CoA carboxyltransferase N-terminal domain. Cys-51, Cys-54, Cys-70, and Cys-73 together coordinate Zn(2+). The segment at 51–73 (CDNCGNMLYVKFLKQNRSVCEEC) adopts a C4-type zinc-finger fold.

This sequence belongs to the AccD/PCCB family. As to quaternary structure, acetyl-CoA carboxylase is a heterohexamer composed of biotin carboxyl carrier protein, biotin carboxylase and 2 subunits each of ACCase subunit alpha and ACCase plastid-coded subunit beta (accD). Zn(2+) is required as a cofactor.

Its subcellular location is the plastid. It localises to the chloroplast stroma. The enzyme catalyses N(6)-carboxybiotinyl-L-lysyl-[protein] + acetyl-CoA = N(6)-biotinyl-L-lysyl-[protein] + malonyl-CoA. The protein operates within lipid metabolism; malonyl-CoA biosynthesis; malonyl-CoA from acetyl-CoA: step 1/1. In terms of biological role, component of the acetyl coenzyme A carboxylase (ACC) complex. Biotin carboxylase (BC) catalyzes the carboxylation of biotin on its carrier protein (BCCP) and then the CO(2) group is transferred by the transcarboxylase to acetyl-CoA to form malonyl-CoA. This Adiantum capillus-veneris (Maidenhair fern) protein is Acetyl-coenzyme A carboxylase carboxyl transferase subunit beta, chloroplastic.